The primary structure comprises 469 residues: Adenosylhomocysteinase (469 aa).

Substrate is bound by residues Thr-63, Asp-139, and Glu-164. NAD(+) is bound at residue 165 to 167 (TTT). Substrate is bound by residues Lys-194 and Asp-198. NAD(+) contacts are provided by residues Asn-199, 228–233 (GYGDVG), Glu-251, Asn-300, 321–323 (IGH), and Asn-375.

The protein belongs to the adenosylhomocysteinase family. It depends on NAD(+) as a cofactor.

Its subcellular location is the cytoplasm. The enzyme catalyses S-adenosyl-L-homocysteine + H2O = L-homocysteine + adenosine. It participates in amino-acid biosynthesis; L-homocysteine biosynthesis; L-homocysteine from S-adenosyl-L-homocysteine: step 1/1. Its function is as follows. May play a key role in the regulation of the intracellular concentration of adenosylhomocysteine. The polypeptide is Adenosylhomocysteinase (Pseudomonas syringae pv. syringae (strain B728a)).